We begin with the raw amino-acid sequence, 113 residues long: Crustacean hyperglycemic hormones B (113 aa).

The N-terminal stretch at 1 to 26 (MVAFRMMSMALLVVVASSWWASPVEA) is a signal peptide. 3 disulfide bridges follow: Cys46–Cys82, Cys62–Cys78, and Cys65–Cys91. Position 111 is a valine amide (Val111).

This sequence belongs to the arthropod CHH/MIH/GIH/VIH hormone family. As to expression, expressed at a constant level in the eyestalks of juveniles and mature females. A low level expression is seen in the central nervous system.

It is found in the secreted. Its function is as follows. Hormone found in the sinus gland of isopods and decapods which controls the blood sugar level. Has a secretagogue action over the amylase released from the midgut gland. May act as a stress hormone and may be involved in the control of molting and reproduction. This chain is Crustacean hyperglycemic hormones B, found in Metapenaeus ensis (Greasyback shrimp).